Here is a 273-residue protein sequence, read N- to C-terminus: 2-dehydro-3-deoxyphosphooctonate aldolase (273 aa).

It belongs to the KdsA family.

Its subcellular location is the cytoplasm. It carries out the reaction D-arabinose 5-phosphate + phosphoenolpyruvate + H2O = 3-deoxy-alpha-D-manno-2-octulosonate-8-phosphate + phosphate. Its pathway is carbohydrate biosynthesis; 3-deoxy-D-manno-octulosonate biosynthesis; 3-deoxy-D-manno-octulosonate from D-ribulose 5-phosphate: step 2/3. It participates in bacterial outer membrane biogenesis; lipopolysaccharide biosynthesis. This Citrifermentans bemidjiense (strain ATCC BAA-1014 / DSM 16622 / JCM 12645 / Bem) (Geobacter bemidjiensis) protein is 2-dehydro-3-deoxyphosphooctonate aldolase.